The sequence spans 522 residues: Glucans biosynthesis protein G (522 aa).

A signal peptide spans 1–33 (MLDNKFGFKQRVASLRWLSAAIMLSVSAVPAWA).

This sequence belongs to the OpgD/OpgG family.

It localises to the periplasm. It participates in glycan metabolism; osmoregulated periplasmic glucan (OPG) biosynthesis. Functionally, involved in the biosynthesis of osmoregulated periplasmic glucans (OPGs). The sequence is that of Glucans biosynthesis protein G from Pectobacterium carotovorum subsp. carotovorum (strain PC1).